Here is a 377-residue protein sequence, read N- to C-terminus: Alternative oxidase, mitochondrial (377 aa).

The chain crosses the membrane as a helical span at residues Leu-149–Leu-169. Residues Glu-156, Glu-195, and His-198 each coordinate Fe cation. The chain crosses the membrane as a helical span at residues Ile-214–Ser-234. Fe cation-binding residues include Glu-246, Glu-303, and His-306.

This sequence belongs to the alternative oxidase family. Requires Fe cation as cofactor.

Its subcellular location is the mitochondrion inner membrane. In terms of biological role, catalyzes cyanide-resistant oxygen consumption. May increase respiration when the cytochrome respiratory pathway is restricted, or in response to low temperatures. This is Alternative oxidase, mitochondrial (AOX1) from Pyricularia oryzae (strain 70-15 / ATCC MYA-4617 / FGSC 8958) (Rice blast fungus).